The chain runs to 129 residues: Small ribosomal subunit protein uS9 (129 aa).

This sequence belongs to the universal ribosomal protein uS9 family.

This is Small ribosomal subunit protein uS9 from Chlorobium luteolum (strain DSM 273 / BCRC 81028 / 2530) (Pelodictyon luteolum).